The chain runs to 156 residues: Small ribosomal subunit protein uS7 (156 aa).

This sequence belongs to the universal ribosomal protein uS7 family. As to quaternary structure, part of the 30S ribosomal subunit. Contacts proteins S9 and S11.

Its function is as follows. One of the primary rRNA binding proteins, it binds directly to 16S rRNA where it nucleates assembly of the head domain of the 30S subunit. Is located at the subunit interface close to the decoding center, probably blocks exit of the E-site tRNA. The polypeptide is Small ribosomal subunit protein uS7 (Streptococcus suis (strain 98HAH33)).